The sequence spans 247 residues: 5-oxoprolinase subunit A (247 aa).

Belongs to the LamB/PxpA family. As to quaternary structure, forms a complex composed of PxpA, PxpB and PxpC.

It carries out the reaction 5-oxo-L-proline + ATP + 2 H2O = L-glutamate + ADP + phosphate + H(+). Functionally, catalyzes the cleavage of 5-oxoproline to form L-glutamate coupled to the hydrolysis of ATP to ADP and inorganic phosphate. This chain is 5-oxoprolinase subunit A, found in Vibrio vulnificus (strain YJ016).